The primary structure comprises 97 residues: Translation initiation factor 1A (97 aa).

Residues 8–82 (IRVRLPDRKK…DRADIVWRYT (75 aa)) enclose the S1-like domain.

It belongs to the eIF-1A family.

Functionally, seems to be required for maximal rate of protein biosynthesis. Enhances ribosome dissociation into subunits and stabilizes the binding of the initiator Met-tRNA(I) to 40 S ribosomal subunits. The protein is Translation initiation factor 1A (eIF1A) of Archaeoglobus fulgidus (strain ATCC 49558 / DSM 4304 / JCM 9628 / NBRC 100126 / VC-16).